The chain runs to 205 residues: High frequency lysogenization protein HflD homolog (205 aa).

It belongs to the HflD family.

It localises to the cytoplasm. The protein localises to the cell inner membrane. In Shewanella halifaxensis (strain HAW-EB4), this protein is High frequency lysogenization protein HflD homolog.